The chain runs to 488 residues: Probable cytosol aminopeptidase (488 aa).

Residues Lys-253 and Asp-258 each contribute to the Mn(2+) site. Lys-265 is an active-site residue. Residues Asp-276, Asp-335, and Glu-337 each contribute to the Mn(2+) site. Arg-339 is an active-site residue.

The protein belongs to the peptidase M17 family. Mn(2+) is required as a cofactor.

It localises to the cytoplasm. The catalysed reaction is Release of an N-terminal amino acid, Xaa-|-Yaa-, in which Xaa is preferably Leu, but may be other amino acids including Pro although not Arg or Lys, and Yaa may be Pro. Amino acid amides and methyl esters are also readily hydrolyzed, but rates on arylamides are exceedingly low.. It catalyses the reaction Release of an N-terminal amino acid, preferentially leucine, but not glutamic or aspartic acids.. Its function is as follows. Presumably involved in the processing and regular turnover of intracellular proteins. Catalyzes the removal of unsubstituted N-terminal amino acids from various peptides. This is Probable cytosol aminopeptidase from Dinoroseobacter shibae (strain DSM 16493 / NCIMB 14021 / DFL 12).